We begin with the raw amino-acid sequence, 207 residues long: Octanoyltransferase (207 aa).

The region spanning Asp29–Glu204 is the BPL/LPL catalytic domain. Substrate-binding positions include Arg68–His75, Ser135–Gly137, and Gly148–Ala150. Cys166 (acyl-thioester intermediate) is an active-site residue.

It belongs to the LipB family.

The protein localises to the cytoplasm. The catalysed reaction is octanoyl-[ACP] + L-lysyl-[protein] = N(6)-octanoyl-L-lysyl-[protein] + holo-[ACP] + H(+). It functions in the pathway protein modification; protein lipoylation via endogenous pathway; protein N(6)-(lipoyl)lysine from octanoyl-[acyl-carrier-protein]: step 1/2. Its function is as follows. Catalyzes the transfer of endogenously produced octanoic acid from octanoyl-acyl-carrier-protein onto the lipoyl domains of lipoate-dependent enzymes. Lipoyl-ACP can also act as a substrate although octanoyl-ACP is likely to be the physiological substrate. The chain is Octanoyltransferase from Methylococcus capsulatus (strain ATCC 33009 / NCIMB 11132 / Bath).